We begin with the raw amino-acid sequence, 449 residues long: Methionine aminopeptidase 2-2 (449 aa).

Positions 1 to 91 (MAAQAAPELA…PRIPLTTLFP (91 aa)) are disordered. Positions 15–28 (NKNTGSAEASTVPA) are enriched in polar residues. Residues 34-50 (DDAENEGDSDDDRDDEQ) are compositionally biased toward acidic residues. The segment covering 61–75 (KKKKKKRPKKKKKTA) has biased composition (basic residues). His199 contributes to the substrate binding site. Residues Asp219, Asp230, and His299 each contribute to the a divalent metal cation site. Position 307 (His307) interacts with substrate. 2 residues coordinate a divalent metal cation: Glu335 and Glu430.

It belongs to the peptidase M24A family. Methionine aminopeptidase eukaryotic type 2 subfamily. It depends on Co(2+) as a cofactor. The cofactor is Zn(2+). Mn(2+) serves as cofactor. Requires Fe(2+) as cofactor.

The protein localises to the cytoplasm. It catalyses the reaction Release of N-terminal amino acids, preferentially methionine, from peptides and arylamides.. Its function is as follows. Cotranslationally removes the N-terminal methionine from nascent proteins. The N-terminal methionine is often cleaved when the second residue in the primary sequence is small and uncharged (Met-Ala-, Cys, Gly, Pro, Ser, Thr, or Val). The sequence is that of Methionine aminopeptidase 2-2 from Arthroderma gypseum (strain ATCC MYA-4604 / CBS 118893) (Microsporum gypseum).